Here is a 103-residue protein sequence, read N- to C-terminus: uncharacterized protein (103 aa).

Residues 38 to 58 form a helical membrane-spanning segment; that stretch reads FTTLITIYVAAFYTGVIGAAV.

Its subcellular location is the membrane. This is an uncharacterized protein from Arabidopsis thaliana (Mouse-ear cress).